The chain runs to 475 residues: Aspartyl/glutamyl-tRNA(Asn/Gln) amidotransferase subunit B (475 aa).

This sequence belongs to the GatB/GatE family. GatB subfamily. In terms of assembly, heterotrimer of A, B and C subunits.

The enzyme catalyses L-glutamyl-tRNA(Gln) + L-glutamine + ATP + H2O = L-glutaminyl-tRNA(Gln) + L-glutamate + ADP + phosphate + H(+). The catalysed reaction is L-aspartyl-tRNA(Asn) + L-glutamine + ATP + H2O = L-asparaginyl-tRNA(Asn) + L-glutamate + ADP + phosphate + 2 H(+). Functionally, allows the formation of correctly charged Asn-tRNA(Asn) or Gln-tRNA(Gln) through the transamidation of misacylated Asp-tRNA(Asn) or Glu-tRNA(Gln) in organisms which lack either or both of asparaginyl-tRNA or glutaminyl-tRNA synthetases. The reaction takes place in the presence of glutamine and ATP through an activated phospho-Asp-tRNA(Asn) or phospho-Glu-tRNA(Gln). The sequence is that of Aspartyl/glutamyl-tRNA(Asn/Gln) amidotransferase subunit B from Staphylococcus aureus (strain bovine RF122 / ET3-1).